The chain runs to 156 residues: Ribosome maturation factor RimP (156 aa).

Belongs to the RimP family.

It is found in the cytoplasm. Its function is as follows. Required for maturation of 30S ribosomal subunits. The sequence is that of Ribosome maturation factor RimP from Fusobacterium nucleatum subsp. nucleatum (strain ATCC 25586 / DSM 15643 / BCRC 10681 / CIP 101130 / JCM 8532 / KCTC 2640 / LMG 13131 / VPI 4355).